The following is a 483-amino-acid chain: Aspartyl/glutamyl-tRNA(Asn/Gln) amidotransferase subunit B (483 aa).

This sequence belongs to the GatB/GatE family. GatB subfamily. As to quaternary structure, heterotrimer of A, B and C subunits.

It catalyses the reaction L-glutamyl-tRNA(Gln) + L-glutamine + ATP + H2O = L-glutaminyl-tRNA(Gln) + L-glutamate + ADP + phosphate + H(+). It carries out the reaction L-aspartyl-tRNA(Asn) + L-glutamine + ATP + H2O = L-asparaginyl-tRNA(Asn) + L-glutamate + ADP + phosphate + 2 H(+). In terms of biological role, allows the formation of correctly charged Asn-tRNA(Asn) or Gln-tRNA(Gln) through the transamidation of misacylated Asp-tRNA(Asn) or Glu-tRNA(Gln) in organisms which lack either or both of asparaginyl-tRNA or glutaminyl-tRNA synthetases. The reaction takes place in the presence of glutamine and ATP through an activated phospho-Asp-tRNA(Asn) or phospho-Glu-tRNA(Gln). In Marinobacter nauticus (strain ATCC 700491 / DSM 11845 / VT8) (Marinobacter aquaeolei), this protein is Aspartyl/glutamyl-tRNA(Asn/Gln) amidotransferase subunit B.